The chain runs to 377 residues: WAT1-related protein At3g56620 (377 aa).

Helical transmembrane passes span 13–33 (FAMVCLQFGYAGMNLVTKVVL), 40–60 (YVLVAYRNAFATAAIAPFALL), 67–87 (PKMTFPIFMQIFVLALLGPLI), 102–122 (TFAGAVTNIVPALTFIISIIC), 142–162 (LVIVVGAMLMILFKIPLITFL), 183–203 (VFLLIASFSWASFFVLQAATL), 210–230 (LSLSTMVCFMGTLQSTALTFV), 235–255 (LSAWNIGFDMNLLASAYAGIM), 274–294 (IFVTAFNPLVVIIGSIIGFLI), and 299–319 (LNLGGVLGMAILVVGVCTVLW). EamA domains are found at residues 22 to 152 (YAGM…MLMI) and 190 to 318 (FSWA…CTVL).

The protein belongs to the drug/metabolite transporter (DMT) superfamily. Plant drug/metabolite exporter (P-DME) (TC 2.A.7.4) family.

Its subcellular location is the membrane. This is WAT1-related protein At3g56620 from Arabidopsis thaliana (Mouse-ear cress).